The chain runs to 459 residues: tRNA modification GTPase MnmE (459 aa).

Residues arginine 22, glutamate 85, and arginine 124 each contribute to the (6S)-5-formyl-5,6,7,8-tetrahydrofolate site. The region spanning 221–380 (GLSTVIVGKP…LEIQIRDLFF (160 aa)) is the TrmE-type G domain. Asparagine 231 is a binding site for K(+). GTP-binding positions include 231-236 (NVGKSS), 250-256 (TEVAGTT), and 275-278 (DTAG). Serine 235 serves as a coordination point for Mg(2+). Residues threonine 250, valine 252, and threonine 255 each coordinate K(+). Residue threonine 256 participates in Mg(2+) binding. (6S)-5-formyl-5,6,7,8-tetrahydrofolate is bound at residue lysine 459.

This sequence belongs to the TRAFAC class TrmE-Era-EngA-EngB-Septin-like GTPase superfamily. TrmE GTPase family. As to quaternary structure, homodimer. Heterotetramer of two MnmE and two MnmG subunits. Requires K(+) as cofactor.

It localises to the cytoplasm. Its function is as follows. Exhibits a very high intrinsic GTPase hydrolysis rate. Involved in the addition of a carboxymethylaminomethyl (cmnm) group at the wobble position (U34) of certain tRNAs, forming tRNA-cmnm(5)s(2)U34. The sequence is that of tRNA modification GTPase MnmE from Staphylococcus aureus (strain USA300 / TCH1516).